A 174-amino-acid polypeptide reads, in one-letter code: Ferredoxin-thioredoxin reductase, variable chain, chloroplastic (174 aa).

Residues 1–62 (MTTGVAVMSS…RTRARLAICC (62 aa)) constitute a chloroplast transit peptide. Over residues 69–81 (DSSTGFDSSSSSP) the composition is skewed to low complexity. Residues 69–89 (DSSTGFDSSSSSPPEEDEELK) form a disordered region. A phosphoserine mark is found at S70 and S71.

The protein belongs to the ferredoxin thioredoxin reductase alpha subunit family. As to quaternary structure, heterodimer of subunit A (variable subunit) and subunit B (catalytic subunit). Heterodimeric FTR forms a complex with ferredoxin and thioredoxin.

The protein resides in the plastid. It is found in the chloroplast. Its function is as follows. Variable subunit of the ferredoxin-thioredoxin reductase (FTR), which catalyzes the two-electron reduction of thioredoxins by the electrons provided by reduced ferredoxin. This is Ferredoxin-thioredoxin reductase, variable chain, chloroplastic (FTRV) from Spinacia oleracea (Spinach).